Reading from the N-terminus, the 95-residue chain is Co-chaperonin GroES (95 aa).

Belongs to the GroES chaperonin family. In terms of assembly, heptamer of 7 subunits arranged in a ring. Interacts with the chaperonin GroEL.

It localises to the cytoplasm. Functionally, together with the chaperonin GroEL, plays an essential role in assisting protein folding. The GroEL-GroES system forms a nano-cage that allows encapsulation of the non-native substrate proteins and provides a physical environment optimized to promote and accelerate protein folding. GroES binds to the apical surface of the GroEL ring, thereby capping the opening of the GroEL channel. This chain is Co-chaperonin GroES, found in Xylella fastidiosa (strain M23).